The primary structure comprises 139 residues: ATP synthase epsilon chain (139 aa).

The protein belongs to the ATPase epsilon chain family. F-type ATPases have 2 components, CF(1) - the catalytic core - and CF(0) - the membrane proton channel. CF(1) has five subunits: alpha(3), beta(3), gamma(1), delta(1), epsilon(1). CF(0) has three main subunits: a, b and c.

The protein localises to the cell inner membrane. In terms of biological role, produces ATP from ADP in the presence of a proton gradient across the membrane. In Marinomonas sp. (strain MWYL1), this protein is ATP synthase epsilon chain.